The primary structure comprises 472 residues: Sarcalumenin (472 aa).

Residues 1-20 (MKRLNLLCCCVASLLLLGTA) form the signal peptide. Leu59 is a glycosylation site (N-linked (GlcNAc...) asparagine). Residues 89–330 (ITSKPMVLFL…IENRMENKIA (242 aa)) form the Dynamin-type G domain. The segment at 99-106 (GPWSVGKS) is G1 motif. The G2 motif stretch occupies residues 127 to 128 (EP). Residues 189–192 (DTPG) are G3 motif. The interval 254–257 (NKAD) is G4 motif. Position 278 (Leu278) is a region of interest, G5 motif. N-linked (GlcNAc...) asparagine glycans are attached at residues Asn280 and Asn388.

This sequence belongs to the TRAFAC class dynamin-like GTPase superfamily. Dynamin/Fzo/YdjA family. N-glycosylated.

Its subcellular location is the sarcoplasmic reticulum lumen. It localises to the sarcoplasmic reticulum membrane. This chain is Sarcalumenin (SRL), found in Gallus gallus (Chicken).